A 125-amino-acid polypeptide reads, in one-letter code: Fluoride-specific ion channel FluC (125 aa).

4 helical membrane passes run 4 to 24, 32 to 52, 67 to 87, and 100 to 120; these read LMLVCLGGAIGAGMRHLTVTA, AFPWGTLAVNVAGSFAMGLLV, LLLAPGMLGGFTTFSAFSLDV, and LAYVLASVAGSILALFVGLWL. Residues Gly75 and Thr78 each contribute to the Na(+) site.

Belongs to the fluoride channel Fluc/FEX (TC 1.A.43) family.

The protein resides in the cell inner membrane. It catalyses the reaction fluoride(in) = fluoride(out). With respect to regulation, na(+) is not transported, but it plays an essential structural role and its presence is essential for fluoride channel function. Functionally, fluoride-specific ion channel. Important for reducing fluoride concentration in the cell, thus reducing its toxicity. This chain is Fluoride-specific ion channel FluC, found in Chelativorans sp. (strain BNC1).